The primary structure comprises 131 residues: Translation initiation factor 5A (131 aa).

At Lys-36 the chain carries Hypusine.

Belongs to the eIF-5A family.

It localises to the cytoplasm. Functionally, functions by promoting the formation of the first peptide bond. The polypeptide is Translation initiation factor 5A (Sulfurisphaera tokodaii (strain DSM 16993 / JCM 10545 / NBRC 100140 / 7) (Sulfolobus tokodaii)).